The chain runs to 248 residues: Ras-related protein RSR1 (248 aa).

Residue 10 to 17 (GAGGVGKS) coordinates GTP. The Effector region signature appears at 32–40 (YDPTIEDSY). Residues 57-61 (DTAGV) and 116-119 (NKCD) contribute to the GTP site. Positions 182–248 (LQKQQQQQQQ…SSGSKFCTII (67 aa)) are disordered. The segment covering 184 to 214 (KQQQQQQQEQDAEGQQQQQKSGKSKSSATQK) has biased composition (low complexity). Polar residues-rich tracts occupy residues 219 to 231 (DGQT…LKQS) and 238 to 248 (SSSGSKFCTII). Cys245 bears the Cysteine methyl ester mark. Residue Cys245 is the site of S-geranylgeranyl cysteine attachment. Positions 246-248 (TII) are cleaved as a propeptide — removed in mature form.

Belongs to the small GTPase superfamily. Ras family.

It localises to the cell membrane. It catalyses the reaction GTP + H2O = GDP + phosphate + H(+). With respect to regulation, alternates between an inactive form bound to GDP and an active form bound to GTP. Activated by a guanine nucleotide-exchange factor (GEF) and inactivated by a GTPase-activating protein (GAP). In terms of biological role, ras-related protein which binds GDP/GTP and possesses intrinsic GTPase activity. Involved in both yeast and hypha development. In the yeast phase, it is required for normal (polar) bud site selection and is involved in cell morphogenesis; in the yeast-mycelial transition it is involved in germ tube emergence; and in the development of the hyphae it is involved in cell elongation. In Candida albicans (Yeast), this protein is Ras-related protein RSR1 (RSR1).